The following is an 89-amino-acid chain: Neurotoxin LmNaTx28 (89 aa).

Residues 1 to 18 (MNLPTVLCIIALILGVRS) form the signal peptide. In terms of domain architecture, LCN-type CS-alpha/beta spans 20 to 85 (KNGFFTKLGK…VADSSEKACQ (66 aa)). 4 disulfide bridges follow: cysteine 33/cysteine 57, cysteine 43/cysteine 62, cysteine 47/cysteine 64, and cysteine 58/cysteine 84.

This sequence belongs to the long (4 C-C) scorpion toxin superfamily. Sodium channel inhibitor family. Beta subfamily. Expressed by the venom gland.

It localises to the secreted. Functionally, binds voltage-independently at site-4 of sodium channels (Nav) and shift the voltage of activation toward more negative potentials thereby affecting sodium channel activation and promoting spontaneous and repetitive firing. This is Neurotoxin LmNaTx28 from Lychas mucronatus (Chinese swimming scorpion).